Here is an 893-residue protein sequence, read N- to C-terminus: Alanine--tRNA ligase (893 aa).

Residues His574, His578, Cys678, and His682 each contribute to the Zn(2+) site.

Belongs to the class-II aminoacyl-tRNA synthetase family. It depends on Zn(2+) as a cofactor.

It is found in the cytoplasm. The enzyme catalyses tRNA(Ala) + L-alanine + ATP = L-alanyl-tRNA(Ala) + AMP + diphosphate. In terms of biological role, catalyzes the attachment of alanine to tRNA(Ala) in a two-step reaction: alanine is first activated by ATP to form Ala-AMP and then transferred to the acceptor end of tRNA(Ala). Also edits incorrectly charged Ser-tRNA(Ala) and Gly-tRNA(Ala) via its editing domain. The sequence is that of Alanine--tRNA ligase from Bifidobacterium longum (strain NCC 2705).